The sequence spans 156 residues: Small ribosomal subunit protein uS7 (156 aa).

It belongs to the universal ribosomal protein uS7 family. As to quaternary structure, part of the 30S ribosomal subunit. Contacts proteins S9 and S11.

Its function is as follows. One of the primary rRNA binding proteins, it binds directly to 16S rRNA where it nucleates assembly of the head domain of the 30S subunit. Is located at the subunit interface close to the decoding center, probably blocks exit of the E-site tRNA. The protein is Small ribosomal subunit protein uS7 of Carboxydothermus hydrogenoformans (strain ATCC BAA-161 / DSM 6008 / Z-2901).